Here is a 123-residue protein sequence, read N- to C-terminus: Immunoglobulin lambda variable 5-45 (123 aa).

Residues 1-19 form the signal peptide; that stretch reads MAWTPLLLLFLSHCTGSLS. Residues 20-44 are framework-1; the sequence is QAVLTQPSSLSASPGASASLTCTLC. One can recognise an Ig-like domain in the interval 20–123; that stretch reads QAVLTQPSSL…YCMIWHSSAS (104 aa). Cys41 and Cys115 are oxidised to a cystine. A complementarity-determining-1 region spans residues 45–53; the sequence is SGINVGTYR. Positions 54-70 are framework-2; that stretch reads IYWYQQKPGSPPQYLLR. Residues 68–92 form a disordered region; that stretch reads LLRYKSDSDKQQGSGVPSRFSGSKD. The complementarity-determining-2 stretch occupies residues 71-77; it reads YKSDSDK. Residues 78-92 are compositionally biased toward polar residues; that stretch reads QQGSGVPSRFSGSKD. Positions 78 to 115 are framework-3; sequence QQGSGVPSRFSGSKDASANAGILLISGLQSEDEADYYC. The complementarity-determining-3 stretch occupies residues 116-123; sequence MIWHSSAS.

Immunoglobulins are composed of two identical heavy chains and two identical light chains; disulfide-linked.

Its subcellular location is the secreted. The protein resides in the cell membrane. V region of the variable domain of immunoglobulin light chains that participates in the antigen recognition. Immunoglobulins, also known as antibodies, are membrane-bound or secreted glycoproteins produced by B lymphocytes. In the recognition phase of humoral immunity, the membrane-bound immunoglobulins serve as receptors which, upon binding of a specific antigen, trigger the clonal expansion and differentiation of B lymphocytes into immunoglobulins-secreting plasma cells. Secreted immunoglobulins mediate the effector phase of humoral immunity, which results in the elimination of bound antigens. The antigen binding site is formed by the variable domain of one heavy chain, together with that of its associated light chain. Thus, each immunoglobulin has two antigen binding sites with remarkable affinity for a particular antigen. The variable domains are assembled by a process called V-(D)-J rearrangement and can then be subjected to somatic hypermutations which, after exposure to antigen and selection, allow affinity maturation for a particular antigen. This Homo sapiens (Human) protein is Immunoglobulin lambda variable 5-45.